The sequence spans 224 residues: Synaptogyrin-2 (224 aa).

Residue Met-1 is modified to N-acetylmethionine. Ser-3 is subject to Phosphoserine. The MARVEL domain maps to 20–171 (YVSQPQVVTR…LASLAYQRYK (152 aa)). 4 helical membrane passes run 30 to 50 (LVSMVLALIVFSCIFGEGYIN), 73 to 93 (AIGVLAFLASAFFLVVDAFFS), 105 to 125 (VIGDLLFSALWTFLWFVGFCF), and 147 to 167 (AAITFSFFSIFSWGVLASLAY).

Belongs to the synaptogyrin family. May be tyrosine phosphorylated by Src. As to expression, ubiquitously expressed with lower expression in brain (at protein level).

The protein localises to the cytoplasmic vesicle membrane. The protein resides in the cytoplasmic vesicle. It is found in the secretory vesicle. Its subcellular location is the synaptic vesicle membrane. May play a role in regulated exocytosis. In neuronal cells, modulates the localization of synaptophysin/SYP into synaptic-like microvesicles and may therefore play a role in the formation and/or the maturation of this vesicles. May also play a role in GLUT4 storage and transport to the plasma membrane. This is Synaptogyrin-2 from Rattus norvegicus (Rat).